The sequence spans 572 residues: Urease subunit alpha (572 aa).

One can recognise a Urease domain in the interval Gly134–Ser572. His139, His141, and Lys222 together coordinate Ni(2+). The residue at position 222 (Lys222) is an N6-carboxylysine. His224 contributes to the substrate binding site. Residues His251 and His277 each coordinate Ni(2+). The active-site Proton donor is the His325. Residue Asp365 participates in Ni(2+) binding.

This sequence belongs to the metallo-dependent hydrolases superfamily. Urease alpha subunit family. In terms of assembly, heterotrimer of UreA (gamma), UreB (beta) and UreC (alpha) subunits. Three heterotrimers associate to form the active enzyme. Ni cation serves as cofactor. Post-translationally, carboxylation allows a single lysine to coordinate two nickel ions.

The protein localises to the cytoplasm. It catalyses the reaction urea + 2 H2O + H(+) = hydrogencarbonate + 2 NH4(+). Its pathway is nitrogen metabolism; urea degradation; CO(2) and NH(3) from urea (urease route): step 1/1. The polypeptide is Urease subunit alpha (Laribacter hongkongensis (strain HLHK9)).